The chain runs to 199 residues: MANRGPSYGSSREVQEKIEQKYDADLENKLVDWIILQCAEDIEHPPPGRAHFQKWLMDGTVLCKLINSLYPPGQEPIPKISESKMAFKQMEQISQFLKAAETYGVRTTDIFQTVDLWEGKDMAAVQRTLMALGSVAVTKDDGCYRGEPSWFHRKAQQNRRGFSEEQLRQGQNVIGLQMGSNKGASQAGMTGYGMPRQIM.

The Calponin-homology (CH) domain occupies 24-136 (ADLENKLVDW…RTLMALGSVA (113 aa)). Position 163 is a phosphoserine (Ser163). The Calponin-like repeat unit spans residues 174–199 (IGLQMGSNKGASQAGMTGYGMPRQIM). Positions 176–188 (LQMGSNKGASQAG) are enriched in polar residues. The tract at residues 176-199 (LQMGSNKGASQAGMTGYGMPRQIM) is disordered.

Belongs to the calponin family.

The chain is Transgelin-3 (TAGLN3) from Pongo abelii (Sumatran orangutan).